Here is a 1029-residue protein sequence, read N- to C-terminus: Protein SUPPRESSOR OF PHYA-105 1 (1029 aa).

The interval 42 to 69 (SETANSDCPGSSAHRNVDLTKPPPPEEA) is disordered. The Protein kinase domain occupies 188–529 (VQMKTPVSSS…ARDILKSELI (342 aa)). ATP contacts are provided by residues 194 to 202 (VSSSNFSQL) and lysine 216. Positions 213 to 269 (VVGKNQETPPEFVSDQDLGSKEKKLDISKSPTPHDVLPLKSSPKGNGMVSHGDGNHS) are disordered. Over residues 230 to 239 (LGSKEKKLDI) the composition is skewed to basic and acidic residues. Aspartate 316 serves as the catalytic Proton acceptor. Residues 347–392 (EDLNRRRPVVEESSSGGRDSKKRKMDLHLNSPGNQLQATSTGRPFK) form a disordered region. Over residues 377–388 (SPGNQLQATSTG) the composition is skewed to polar residues. The stretch at 557–589 (VQKKKKASKLLQDIQTLEDDIKEAERRYSSNVS) forms a coiled coil. A disordered region spans residues 653–679 (ARSDKTLKDRDRCSENQNENQDMSTKG). Residues 654-666 (RSDKTLKDRDRCS) show a composition bias toward basic and acidic residues. A compositionally biased stretch (polar residues) spans 667–679 (ENQNENQDMSTKG). 7 WD repeats span residues 714–753 (NSAS…NESV), 763–803 (VNKS…GFSQ), 806–846 (EHQK…SLGT), 848–888 (WSPA…TPWC), 892–930 (GHEK…SSGL), 932–971 (PGAC…YSYY), and 997–1029 (DNGQ…LKLV). The DWD box signature appears at 866–881 (LAFGSADYKVYCYDLR).

Interacts with CO, COP1, HFR1, HY5 and PHYA. Light induces dissociation of the SPA1/COP1 complex. Binds to CRY1 in response to blue light, this interaction prevents SPA1/COP1 complex formation but stimulate CRY2/COP1 complex, and thus avoid COP1-dependent degradation of the transcription factor HY5 by the proteasome and promotes hypocotyl elongation.

It localises to the nucleus speckle. The protein resides in the nucleus. Its subcellular location is the PML body. Its function is as follows. Controls normal photoperiodic flowering and regulates circadian rhythms. Required for suppression of photomorphogenesis in dark-grown seedlings and for normal elongation growth of adult plants. Integral component of the COP1/SPA E3 ubiquitin-protein ligase complex. Involved in HY5, HFR1, LAF1 and CO degradation. This is Protein SUPPRESSOR OF PHYA-105 1 (SPA1) from Arabidopsis thaliana (Mouse-ear cress).